The chain runs to 550 residues: Beta-fructofuranosidase, insoluble isoenzyme CWINV6 (550 aa).

Substrate is bound by residues 28-31 (WLND), Q47, 92-93 (WS), 157-158 (RD), and E214. The active site involves D31. Residues N235 and N272 are each glycosylated (N-linked (GlcNAc...) asparagine).

The protein belongs to the glycosyl hydrolase 32 family. In terms of tissue distribution, expressed in seedlings and leaves, and, to a lower extent, in flowers and seeds.

It is found in the secreted. Its subcellular location is the extracellular space. It localises to the apoplast. The protein localises to the cell wall. It carries out the reaction Hydrolysis of terminal, non-reducing (2-&gt;1)- and (2-&gt;6)-linked beta-D-fructofuranose residues in fructans.. 6 and 1-fructan exohydrolase that can degrade both inulin and levan-type fructans, such as phlein, levan, neokestose, levanbiose, 6-kestose, 1-kestose, inulin, and 1,1-nystose. In Arabidopsis thaliana (Mouse-ear cress), this protein is Beta-fructofuranosidase, insoluble isoenzyme CWINV6 (CWINV6).